We begin with the raw amino-acid sequence, 1723 residues long: Lys-gingipain HG66 (1723 aa).

Positions 1–24 (MRKLLLLIAASLLGVGLYAQNAKI) are cleaved as a signal peptide. Residues 25–228 (KLDAPTTRTT…ETAYKQLFNR (204 aa)) constitute a propeptide that is removed on maturation. Residues Asp313, Asp337, Asp339, Phe341, and Glu343 each coordinate Ca(2+). His444 (proton donor) is an active-site residue. Catalysis depends on Cys477, which acts as the Nucleophile. Residues Phe482 and Glu491 each coordinate Ca(2+). Residues 965 to 985 (DAPNGTPNPNPNPNPGTTTLS) are disordered. Residues Ser987, Glu989, Asp1000, Asp1002, Asp1004, His1006, Ser1021, Gly1023, Asn1042, Asp1145, and Glu1146 each contribute to the Ca(2+) site.

It belongs to the peptidase C25 family. In terms of processing, proteolytically cleaved into a catalytic subunit and three adhesins. Arg-gingipain is involved in this post-translational processing.

The protein localises to the secreted. The enzyme catalyses Endopeptidase with strict specificity for lysyl bonds.. Its function is as follows. Cysteine proteinase with a strong preference for substrates with Lys in the P1 position. Hydrolyzes bovine hemoglobin, bovine serum albumin, casein, human placental type I collagen and human IgA and IgG. Disrupts the functions of polymorphonuclear leukocytes. May act as a virulence factor in the development of peridontal disease. Involved in the coaggregation of P.gingivalis with other oral bacteria. This is Lys-gingipain HG66 from Porphyromonas gingivalis (Bacteroides gingivalis).